The primary structure comprises 813 residues: Calpain-7 (813 aa).

M1 is subject to N-acetylmethionine. T95 carries the post-translational modification Phosphothreonine. In terms of domain architecture, Calpain catalytic spans 232–540; the sequence is RERFAYPMPF…YDVVYLSWNP (309 aa). Active-site residues include C290, H458, and N478. The tract at residues 541 to 701 is domain III; sequence ALFKESTCIH…INGKWSGQSA (161 aa). The domain N stretch occupies residues 702-813; the sequence is GGCGNFQETH…TVPIKTTQLQ (112 aa).

Belongs to the peptidase C2 family. In terms of tissue distribution, ubiquitous.

The protein resides in the nucleus. Its function is as follows. Calcium-regulated non-lysosomal thiol-protease. This Mus musculus (Mouse) protein is Calpain-7 (Capn7).